The primary structure comprises 391 residues: Solute carrier family 35 member F2 (391 aa).

10 helical membrane-spanning segments follow: residues 39 to 59, 73 to 93, 108 to 128, 137 to 157, 165 to 185, 200 to 220, 230 to 250, 267 to 287, 294 to 314, and 318 to 338; these read MLLS…IRLT, LFQS…TLAV, WWKY…VVKA, IQLL…FFLL, FIGA…DVLM, LIGD…SVCQ, VELL…QLAI, LLYV…PVVI, AINL…LFLF, and FSGL…FYFS. A disordered region spans residues 361–391; it reads VELPSSGQLEPSVTYTSLSQETEEEPRVRVA. Polar residues predominate over residues 365 to 380; it reads SSGQLEPSVTYTSLSQ.

This sequence belongs to the SLC35F solute transporter family.

Its subcellular location is the membrane. Its function is as follows. Putative solute transporter. This is Solute carrier family 35 member F2 (slc35f2) from Xenopus tropicalis (Western clawed frog).